We begin with the raw amino-acid sequence, 264 residues long: 3-methyl-2-oxobutanoate hydroxymethyltransferase (264 aa).

Mg(2+) is bound by residues Asp45 and Asp84. Residues 45 to 46 (DS), Asp84, and Lys112 each bind 3-methyl-2-oxobutanoate. Mg(2+) is bound at residue Glu114. Glu181 acts as the Proton acceptor in catalysis.

It belongs to the PanB family. Homodecamer; pentamer of dimers. Mg(2+) serves as cofactor.

The protein localises to the cytoplasm. It catalyses the reaction 3-methyl-2-oxobutanoate + (6R)-5,10-methylene-5,6,7,8-tetrahydrofolate + H2O = 2-dehydropantoate + (6S)-5,6,7,8-tetrahydrofolate. It participates in cofactor biosynthesis; (R)-pantothenate biosynthesis; (R)-pantoate from 3-methyl-2-oxobutanoate: step 1/2. Functionally, catalyzes the reversible reaction in which hydroxymethyl group from 5,10-methylenetetrahydrofolate is transferred onto alpha-ketoisovalerate to form ketopantoate. The polypeptide is 3-methyl-2-oxobutanoate hydroxymethyltransferase (Vibrio parahaemolyticus serotype O3:K6 (strain RIMD 2210633)).